The following is a 403-amino-acid chain: S-adenosylmethionine synthase (403 aa).

His-15 is an ATP binding site. Asp-17 is a binding site for Mg(2+). Glu-43 serves as a coordination point for K(+). Residues Glu-56 and Gln-99 each contribute to the L-methionine site. The interval 99-109 (QSPDINQGVDR) is flexible loop. ATP contacts are provided by residues 166-168 (DAK), 232-233 (KF), Asp-241, 247-248 (RK), Ala-264, and Lys-268. Residue Asp-241 participates in L-methionine binding. Lys-272 contributes to the L-methionine binding site.

This sequence belongs to the AdoMet synthase family. Homotetramer; dimer of dimers. Mg(2+) serves as cofactor. Requires K(+) as cofactor.

It is found in the cytoplasm. The enzyme catalyses L-methionine + ATP + H2O = S-adenosyl-L-methionine + phosphate + diphosphate. It functions in the pathway amino-acid biosynthesis; S-adenosyl-L-methionine biosynthesis; S-adenosyl-L-methionine from L-methionine: step 1/1. Functionally, catalyzes the formation of S-adenosylmethionine (AdoMet) from methionine and ATP. The overall synthetic reaction is composed of two sequential steps, AdoMet formation and the subsequent tripolyphosphate hydrolysis which occurs prior to release of AdoMet from the enzyme. This Xylella fastidiosa (strain Temecula1 / ATCC 700964) protein is S-adenosylmethionine synthase.